Reading from the N-terminus, the 555-residue chain is Esterase-5A (555 aa).

Positions M1–A19 are cleaved as a signal peptide. Cysteines 87 and 106 form a disulfide. N-linked (GlcNAc...) asparagine glycans are attached at residues N95 and N116. S210 (acyl-ester intermediate) is an active-site residue. A disulfide bridge connects residues C262 and C274. Residues N479 and N510 are each glycosylated (N-linked (GlcNAc...) asparagine). A disulfide bond links C518 and C539.

It belongs to the type-B carboxylesterase/lipase family.

Its subcellular location is the secreted. It catalyses the reaction a carboxylic ester + H2O = an alcohol + a carboxylate + H(+). The polypeptide is Esterase-5A (Est-5A) (Drosophila miranda (Fruit fly)).